The following is a 398-amino-acid chain: 4-hydroxy-3-methylbut-2-enyl diphosphate reductase (398 aa).

Cysteine 66 is a [4Fe-4S] cluster binding site. Histidine 96 contacts (2E)-4-hydroxy-3-methylbut-2-enyl diphosphate. Histidine 96 is a dimethylallyl diphosphate binding site. Residue histidine 96 participates in isopentenyl diphosphate binding. Cysteine 157 provides a ligand contact to [4Fe-4S] cluster. Histidine 185 provides a ligand contact to (2E)-4-hydroxy-3-methylbut-2-enyl diphosphate. Histidine 185 is a dimethylallyl diphosphate binding site. Position 185 (histidine 185) interacts with isopentenyl diphosphate. The active-site Proton donor is the glutamate 187. Position 250 (threonine 250) interacts with (2E)-4-hydroxy-3-methylbut-2-enyl diphosphate. Cysteine 288 contributes to the [4Fe-4S] cluster binding site. The (2E)-4-hydroxy-3-methylbut-2-enyl diphosphate site is built by serine 317, serine 318, asparagine 319, and serine 380. Dimethylallyl diphosphate contacts are provided by serine 317, serine 318, asparagine 319, and serine 380. Positions 317, 318, 319, and 380 each coordinate isopentenyl diphosphate.

The protein belongs to the IspH family. The cofactor is [4Fe-4S] cluster.

It catalyses the reaction isopentenyl diphosphate + 2 oxidized [2Fe-2S]-[ferredoxin] + H2O = (2E)-4-hydroxy-3-methylbut-2-enyl diphosphate + 2 reduced [2Fe-2S]-[ferredoxin] + 2 H(+). The enzyme catalyses dimethylallyl diphosphate + 2 oxidized [2Fe-2S]-[ferredoxin] + H2O = (2E)-4-hydroxy-3-methylbut-2-enyl diphosphate + 2 reduced [2Fe-2S]-[ferredoxin] + 2 H(+). The protein operates within isoprenoid biosynthesis; dimethylallyl diphosphate biosynthesis; dimethylallyl diphosphate from (2E)-4-hydroxy-3-methylbutenyl diphosphate: step 1/1. It participates in isoprenoid biosynthesis; isopentenyl diphosphate biosynthesis via DXP pathway; isopentenyl diphosphate from 1-deoxy-D-xylulose 5-phosphate: step 6/6. In terms of biological role, catalyzes the conversion of 1-hydroxy-2-methyl-2-(E)-butenyl 4-diphosphate (HMBPP) into a mixture of isopentenyl diphosphate (IPP) and dimethylallyl diphosphate (DMAPP). Acts in the terminal step of the DOXP/MEP pathway for isoprenoid precursor biosynthesis. The polypeptide is 4-hydroxy-3-methylbut-2-enyl diphosphate reductase (Prochlorococcus marinus (strain MIT 9515)).